We begin with the raw amino-acid sequence, 362 residues long: MKRQLILEDGSVFVGKGFGSDREMSGEVVFNTGMTGYQEMLSDPSYCGQIVTLTYPLIGNYGINRDDFESMNPAIHGLIVKEACDIPSNWRSEESLDSLLKAKQIPGLSGIDTRKLTRLIRMHGTLKGQLCPLDVDVEQIVQELKATPTPTDQVSRVSTRDPYHVPGPGKRVVLVDYGMKHNILQELIRRNCEVFVVPYHTSAEEVLRLGPDGVLLSNGPGNPEDVSEGVEMIRNLLGKVPLFGICLGHQLFALACGAKTEKLRFGHRGSNHPVRERSTGLIEITAQNHGYTVTEGSLVNTDLIVTHEAVNDGTIEGLAHKVHPAFSVQYHPEASPGPEDSNVLFDRFIKLMESNKHRALTV.

Residues 1–168 form a CPSase region; that stretch reads MKRQLILEDG…TRDPYHVPGP (168 aa). Ser45, Gly219, and Gly221 together coordinate L-glutamine. The Glutamine amidotransferase type-1 domain maps to 171–358; the sequence is RVVLVDYGMK…IKLMESNKHR (188 aa). Cys246 acts as the Nucleophile in catalysis. Positions 247, 250, 288, 290, and 291 each coordinate L-glutamine. Catalysis depends on residues His331 and Glu333.

It belongs to the CarA family. Composed of two chains; the small (or glutamine) chain promotes the hydrolysis of glutamine to ammonia, which is used by the large (or ammonia) chain to synthesize carbamoyl phosphate. Tetramer of heterodimers (alpha,beta)4.

The catalysed reaction is hydrogencarbonate + L-glutamine + 2 ATP + H2O = carbamoyl phosphate + L-glutamate + 2 ADP + phosphate + 2 H(+). It carries out the reaction L-glutamine + H2O = L-glutamate + NH4(+). It functions in the pathway pyrimidine metabolism; UMP biosynthesis via de novo pathway; (S)-dihydroorotate from bicarbonate: step 1/3. In terms of biological role, small subunit of the glutamine-dependent carbamoyl phosphate synthetase (CPSase). CPSase catalyzes the formation of carbamoyl phosphate from the ammonia moiety of glutamine, carbonate, and phosphate donated by ATP, constituting the first step of the biosynthetic pathway leading to pyrimidine nucleotides. The small subunit (glutamine amidotransferase) binds and cleaves glutamine to supply the large subunit with the substrate ammonia. This is Carbamoyl phosphate synthase pyrimidine-specific small chain from Halalkalibacterium halodurans (strain ATCC BAA-125 / DSM 18197 / FERM 7344 / JCM 9153 / C-125) (Bacillus halodurans).